The following is a 499-amino-acid chain: MALPTLPSNWHSRSRVLEQQIVRQREQEARLRHQWDQTNQYFKQSNVCSSKQAQWSSRQSYQKSMNAFHQEKQKEEKKKTLEYRREQLRKLLQEERDLLEEELKELRCNKEHNVSDMRQRTEELKSAREERQKQLAEELLYEQWKKNNVKLREVESSLFKKHVVDAWGEQITARNQEKEEEDMEKKRLENEYELARREAIERMKRDKEKRQQQEEELARVLKWQMEELKLKDLEAKKLKKEQEDLLRQQWEIEELEEERRKMEQCRKKTELSHFLSRQYNAQMKRRAQQVQEELEMDKKILSALISKEDEDQHLQSARREQAIADVAWMKHVIEEQLHLERQREAELDTLFREEAKQVWAKRETEWERERNARNRLMKEVLAGRQMQIQERIERNQLAQAESVMNRERLLRQLEEARQFTSREKKQEEEQKTARRTELEAQIAEQLLKGKEAIVQQEEEEKEFKLAEDLENDLLQQEAEIMTQRGYQKKTYSRPRTAWS.

Coiled-coil stretches lie at residues 17–143 (LEQQ…LYEQ), 169–304 (EQIT…LSAL), and 405–485 (NRER…TQRG). Residues 260-426 (RKMEQCRKKT…RQFTSREKKQ (167 aa)) form a trichohyalin/plectin homology domain region.

It belongs to the TCHP family.

It localises to the cytoplasm. The protein localises to the cytoskeleton. It is found in the microtubule organizing center. The protein resides in the centrosome. May act as a 'capping' or 'branching' protein for keratin filaments in the cell periphery. May regulate K8/K18 filament and desmosome organization mainly at the apical or peripheral regions of simple epithelial cells. This chain is Trichoplein keratin filament-binding protein, found in Xenopus laevis (African clawed frog).